A 289-amino-acid chain; its full sequence is UPF0276 protein BB1291 (289 aa).

The protein belongs to the UPF0276 family.

This is UPF0276 protein BB1291 from Bordetella bronchiseptica (strain ATCC BAA-588 / NCTC 13252 / RB50) (Alcaligenes bronchisepticus).